The primary structure comprises 228 residues: Nucleolar protein 12 (228 aa).

A disordered region spans residues 1–22 (MGKSDRLQQGSKGKGGGKRKHG). Residues 40–103 (FHKRKLERRR…AITATTECVQ (64 aa)) adopt a coiled-coil conformation. The span at 126 to 145 (LLEPAQRDGGDGEERERTEA) shows a compositional bias: basic and acidic residues. Residues 126–228 (LLEPAQRDGG…QTGRNERSQD (103 aa)) form a disordered region. Polar residues predominate over residues 158 to 170 (KIQSLTASLNSLV). The span at 171 to 180 (KQKKRRKQKR) shows a compositional bias: basic residues. The span at 181 to 195 (RQEAKQRSHQSDRKS) shows a compositional bias: basic and acidic residues. Positions 204–220 (NKQKQGKSTKRQRRRQT) are enriched in basic residues.

The protein belongs to the RRP17 family.

It localises to the nucleus. Its subcellular location is the nucleolus. Its function is as follows. May bind to rRNA. The protein is Nucleolar protein 12 (nol12) of Danio rerio (Zebrafish).